Reading from the N-terminus, the 124-residue chain is MAFKVVVSDSKTGKSYQFETESNALIGKKIGDEISGSIVELEGYKLKITGGSDRCGFAMRHDIHGAMKMRVLLKEGPGYNVKEKGLRRRKSLRGNTISKDITLINTKVVEYGSAPLGGEPESTE.

The protein belongs to the eukaryotic ribosomal protein eS6 family.

This is Small ribosomal subunit protein eS6 from Methanococcus maripaludis (strain DSM 14266 / JCM 13030 / NBRC 101832 / S2 / LL).